The following is a 151-amino-acid chain: Peptide methionine sulfoxide reductase MsrB (151 aa).

The 123-residue stretch at 5–127 (KEERLKQLTR…NSAALRFVPK (123 aa)) folds into the MsrB domain. The active-site Nucleophile is Cys-116.

This sequence belongs to the MsrB Met sulfoxide reductase family.

It carries out the reaction L-methionyl-[protein] + [thioredoxin]-disulfide + H2O = L-methionyl-(R)-S-oxide-[protein] + [thioredoxin]-dithiol. The protein is Peptide methionine sulfoxide reductase MsrB of Bacillus licheniformis (strain ATCC 14580 / DSM 13 / JCM 2505 / CCUG 7422 / NBRC 12200 / NCIMB 9375 / NCTC 10341 / NRRL NRS-1264 / Gibson 46).